Here is a 169-residue protein sequence, read N- to C-terminus: Lipoprotein signal peptidase (169 aa).

Transmembrane regions (helical) follow at residues 59 to 79 (PTVLLLLTGVITIMVLAYVIW) and 84 to 104 (TTLFLLPFALITGGGIGNMID). Residues D113 and D139 contribute to the active site. The helical transmembrane segment at 132–152 (WPIFNIADSAITIGACMLMIF) threads the bilayer.

Belongs to the peptidase A8 family.

The protein resides in the cell inner membrane. The enzyme catalyses Release of signal peptides from bacterial membrane prolipoproteins. Hydrolyzes -Xaa-Yaa-Zaa-|-(S,diacylglyceryl)Cys-, in which Xaa is hydrophobic (preferably Leu), and Yaa (Ala or Ser) and Zaa (Gly or Ala) have small, neutral side chains.. It participates in protein modification; lipoprotein biosynthesis (signal peptide cleavage). In terms of biological role, this protein specifically catalyzes the removal of signal peptides from prolipoproteins. The polypeptide is Lipoprotein signal peptidase (Pelodictyon phaeoclathratiforme (strain DSM 5477 / BU-1)).